Here is a 553-residue protein sequence, read N- to C-terminus: Membrane protein insertase YidC (553 aa).

Residues 3–23 (IKRTILWVIFSLSVVLLFDNW) form a helical membrane-spanning segment. The tract at residues 44–64 (AAAPGGTPAGDVPKAAAPAAA) is disordered. Helical transmembrane passes span 359–379 (LLGN…LVFF), 429–449 (LGGC…YWVL), 467–487 (LASP…MFVQ), and 507–527 (PIAF…YWVV).

It belongs to the OXA1/ALB3/YidC family. Type 1 subfamily. Interacts with the Sec translocase complex via SecD. Specifically interacts with transmembrane segments of nascent integral membrane proteins during membrane integration.

Its subcellular location is the cell inner membrane. Required for the insertion and/or proper folding and/or complex formation of integral membrane proteins into the membrane. Involved in integration of membrane proteins that insert both dependently and independently of the Sec translocase complex, as well as at least some lipoproteins. Aids folding of multispanning membrane proteins. The polypeptide is Membrane protein insertase YidC (Ralstonia nicotianae (strain ATCC BAA-1114 / GMI1000) (Ralstonia solanacearum)).